The primary structure comprises 735 residues: Two pore calcium channel protein 1B (735 aa).

Residues 1–76 (MEEYLLPGES…ELYFMFTRFD (76 aa)) lie on the Cytoplasmic side of the membrane. The chain crosses the membrane as a helical span at residues 77–97 (FLWSLNYLALVVLNFFEKPLW). At 98-125 (CSKHLAESCNNRDYYYLGELPFLTGAES) the chain is on the extracellular side. The helical transmembrane segment at 126-146 (LIFEGVTLLLLIIHILFPISY) threads the bilayer. The Cytoplasmic portion of the chain corresponds to 147 to 161 (EGFNLYWRSLLNRLK). Residues 162 to 182 (VILLLILVADIVVYILLPADF) traverse the membrane as a helical segment. A topological domain (extracellular) is located at residue Tyr-183. The helical; Voltage-sensor transmembrane segment at 184–202 (YLPFRIAPYLRVVFFILNI) threads the bilayer. At 203–208 (RELRDS) the chain is on the cytoplasmic side. Residues 209–229 (FFILAGMLGTYLNVVALSALF) traverse the membrane as a helical segment. At 230–248 (LLFSSWLAYVFFEDTRQGK) the chain is on the extracellular side. Positions 249–263 (TTFTSYGTTLYQMFV) form an intramembrane region, pore-forming. The Extracellular portion of the chain corresponds to 264–286 (LFTTSNNPDVWIPAYKDSRWYCL). The helical transmembrane segment at 287 to 307 (FFVLYVLLGVYFVTNLILAVV) threads the bilayer. Residues 308–431 (YDSFKSELVK…ASEKLRGFIR (124 aa)) are Cytoplasmic-facing. 2 consecutive EF-hand domains span residues 325 to 360 (LRLRTLKKAFSLIDEANNGLLNEKQCTLLFEELNKY) and 366 to 401 (ISGDDFKSIFNELDDTGDFKINLEEFADLCSAIGLR). The chain crosses the membrane as a helical span at residues 432 to 452 (GATFEYIIVFVLLVNLVAVII). The Extracellular portion of the chain corresponds to 453–470 (ETTLDIQNNSGQTFWQKV). N-linked (GlcNAc...) asparagine glycosylation occurs at Asn-460. The helical transmembrane segment at 471–491 (EFTFGWLYVIEMALKVYTYGF) threads the bilayer. The Cytoplasmic segment spans residues 492–501 (ENYWRDGQNR). Residues 502–522 (FDFIVTWVIVIGETTTFVAPD) form a helical membrane-spanning segment. Topologically, residues 523 to 531 (DLTFLSNGE) are extracellular. A helical; Voltage-sensor transmembrane segment spans residues 532 to 549 (WIRYLLIARMLRLIRLLM). Residues 550–560 (HVERYRAFVAT) lie on the Cytoplasmic side of the membrane. The helical transmembrane segment at 561–581 (FLTLIPSLMPYLGTIFCILCF) threads the bilayer. Residues 582 to 618 (YCSLGLQIFGGIVNTGNPNLAQTDLAGNDYLLFNFND) are Extracellular-facing. An intramembrane region (pore-forming) is located at residues 619–633 (YPNGMVTLFNILVMG). At 634–654 (NWQVWMQSYKELTGTSWTYAY) the chain is on the extracellular side. The helical transmembrane segment at 655–675 (FVSFYLISVLWLLNLIVAFVL) threads the bilayer. At 676–735 (EAFQAEMDLEASARCVDGDDKEAKRERRRNVGTKTRSQRVDFLLHHMLRSELTECSNDNP) the chain is on the cytoplasmic side.

This sequence belongs to the calcium channel alpha-1 subunit (TC 1.A.1.11) family. Two pore calcium channel subfamily. As to quaternary structure, homodimer.

It localises to the membrane. Inhibited by Al(3+), La(3+) and Gd(3+). Up-regulated by H(2)O(2), cryptogein, salicylic acid (SA) and cold shock. Its function is as follows. Functions as a voltage-gated inward-rectifying Ca(2+) channel (VDCC) across the plasma membrane that mediates sucrose-induced Ca(2+) influx in autotrophically grown leaf cells. Acts as the major ROS-responsive Ca(2+) channel and is the possible target of Al-dependent inhibition. Plays a regulatory role in defense responses. The protein is Two pore calcium channel protein 1B (TPC1B) of Nicotiana tabacum (Common tobacco).